Reading from the N-terminus, the 182-residue chain is MPTPKKGARLGGSASHQKKILSNLAAQLFEHGAIKTTDAKAKLLRPYVEKIITKAKRGTLADRRNVLKLIPNKEVVAYLFNELAPKFEGRPGGYTRIIKLENRKGDNAPISQISLVTEQLASTEAERANRVAASKAKKAEAEAAEAKAEEAEEAPEVEADTATDKAAEAEAAEAADEAAEDK.

The interval 126 to 182 is disordered; the sequence is ERANRVAASKAKKAEAEAAEAKAEEAEEAPEVEADTATDKAAEAEAAEAADEAAEDK. Positions 137 to 149 are enriched in basic and acidic residues; that stretch reads KKAEAEAAEAKAE. 2 stretches are compositionally biased toward acidic residues: residues 150–161 and 170–182; these read EAEEAPEVEADT and EAAE…AEDK.

Belongs to the bacterial ribosomal protein bL17 family. As to quaternary structure, part of the 50S ribosomal subunit. Contacts protein L32.

This chain is Large ribosomal subunit protein bL17, found in Corynebacterium jeikeium (strain K411).